Here is a 127-residue protein sequence, read N- to C-terminus: Fluoride-specific ion channel FluC 1 (127 aa).

The next 3 membrane-spanning stretches (helical) occupy residues 6 to 26 (PLVT…GSNL), 29 to 49 (FVGL…CGSF), and 95 to 115 (EWAV…VLVG).

This sequence belongs to the fluoride channel Fluc/FEX (TC 1.A.43) family.

The protein resides in the cell membrane. The catalysed reaction is fluoride(in) = fluoride(out). Its function is as follows. Fluoride-specific ion channel. Important for reducing fluoride concentration in the cell, thus reducing its toxicity. In Haloarcula marismortui (strain ATCC 43049 / DSM 3752 / JCM 8966 / VKM B-1809) (Halobacterium marismortui), this protein is Fluoride-specific ion channel FluC 1.